The chain runs to 223 residues: GRF1-interacting factor 3 (223 aa).

Residues 179–223 (ANNAGPNDASGGGKPDGTNMSQSGADGQGGSAARHGGGDAKTEGK) are disordered. A compositionally biased stretch (basic and acidic residues) spans 214–223 (GGGDAKTEGK).

This sequence belongs to the SS18 family. Interacts with GRF1. Predominantly expressed in shoot tips containing the shoot apical meristem (SAM) and flower buds. Also expressed in mature flowers.

Transcription coactivator that plays a role in the regulation of cell expansion in leaf and cotyledons tissues. Component of a network formed by miR396, the GRFs and their interacting factors (GIFs) acting in the regulation of meristem function, at least partially through the control of cell proliferation. GIFs are involved in the positive regulation of cell proliferation of lateral organs in a functionally redundant manner. This is GRF1-interacting factor 3 (GIF3) from Arabidopsis thaliana (Mouse-ear cress).